The chain runs to 212 residues: Protein Thf1 (212 aa).

The stretch at 179–201 (ERMEQAVELMQETLAADRRKKEK) forms a coiled coil.

Belongs to the THF1 family.

In terms of biological role, may be involved in photosynthetic membrane biogenesis. This Parasynechococcus marenigrum (strain WH8102) protein is Protein Thf1.